A 312-amino-acid polypeptide reads, in one-letter code: Olfactory receptor 2L13 (312 aa).

The Extracellular portion of the chain corresponds to 1–24 (MEKWNHTSNDFILLGLLPPNQTGI). N-linked (GlcNAc...) asparagine glycans are attached at residues asparagine 5 and asparagine 20. Residues 25–48 (FLLCLIILIFFLASVGNSAMIHLI) form a helical membrane-spanning segment. Over 49–56 (HVDPRLHT) the chain is Cytoplasmic. The helical transmembrane segment at 57–78 (PMYFLLSQLSLMDLMYISTTVP) threads the bilayer. Topologically, residues 79 to 99 (KMAYNFLSGQKGISFLGCGVQ) are extracellular. Residues cysteine 96 and cysteine 188 are joined by a disulfide bond. Residues 100–119 (SFFFLTMACSEGLLLTSMAY) form a helical membrane-spanning segment. Residues 120 to 138 (DRYLAICHSLYYPIRMSKM) are Cytoplasmic-facing. The helical transmembrane segment at 139-157 (MCVKMIGGSWTLGSINSLA) threads the bilayer. At 158–194 (HTVFALHIPYCRSRAIDHFFCDVPAMLLLACTDTWVY) the chain is on the extracellular side. The chain crosses the membrane as a helical span at residues 195–218 (EYMVFVSTSLFLLFPFIGITSSCG). At 219-235 (RVLFAVYHMHSKEGRKK) the chain is on the cytoplasmic side. The helical transmembrane segment at 236 to 258 (AFTTISTHLTVVIFYYAPFVYTY) threads the bilayer. Topologically, residues 259–271 (LRPRNLRSPAEDK) are extracellular. Residues 272 to 291 (ILAVFYTILTPMLNPIIYSL) form a helical membrane-spanning segment. At 292-312 (RNKEVLGAMRRVFGIFSFLKE) the chain is on the cytoplasmic side.

This sequence belongs to the G-protein coupled receptor 1 family.

It is found in the cell membrane. Functionally, odorant receptor. The sequence is that of Olfactory receptor 2L13 (OR2L13) from Homo sapiens (Human).